The following is a 186-amino-acid chain: Peptide deformylase (186 aa).

Fe cation is bound by residues Cys-113 and His-156. Glu-157 is a catalytic residue. Position 160 (His-160) interacts with Fe cation.

Belongs to the polypeptide deformylase family. The cofactor is Fe(2+).

It catalyses the reaction N-terminal N-formyl-L-methionyl-[peptide] + H2O = N-terminal L-methionyl-[peptide] + formate. Its function is as follows. Removes the formyl group from the N-terminal Met of newly synthesized proteins. Requires at least a dipeptide for an efficient rate of reaction. N-terminal L-methionine is a prerequisite for activity but the enzyme has broad specificity at other positions. The sequence is that of Peptide deformylase from Ligilactobacillus salivarius (strain UCC118) (Lactobacillus salivarius).